The chain runs to 503 residues: Angiopoietin-4 (503 aa).

The N-terminal stretch at 1–24 (MLSQLAMLQGSLLLVVATMSVAQQ) is a signal peptide. Residues 84–238 (TQQVKQLEQA…RQSAALTNIE (155 aa)) adopt a coiled-coil conformation. Asn96, Asn126, Asn140, Asn158, Asn247, Asn274, Asn311, Asn337, and Asn427 each carry an N-linked (GlcNAc...) asparagine glycan. The Fibrinogen C-terminal domain occupies 282–502 (MAGEQVFQDC…ASRMMIRPLD (221 aa)). Cys291 and Cys320 are disulfide-bonded. The cysteines at positions 444 and 457 are disulfide-linked.

As to quaternary structure, homodimer; disulfide-linked. Interacts with TEK/TIE2. In terms of tissue distribution, highly expressed in the lung with much lower levels found in other tissues.

It is found in the secreted. Its function is as follows. Binds to TEK/TIE2, modulating ANGPT1 signaling. Can induce tyrosine phosphorylation of TEK/TIE2. Promotes endothelial cell survival, migration and angiogenesis. This Homo sapiens (Human) protein is Angiopoietin-4 (ANGPT4).